A 227-amino-acid chain; its full sequence is Cytochrome c oxidase subunit 2 (227 aa).

Residues 1–14 are Mitochondrial intermembrane-facing; that stretch reads MAHAAQVGLQDATS. Residues 15-45 form a helical membrane-spanning segment; sequence PIMEELIIFHDHALMIIFLICFLVLYALFLT. Residues 46–59 lie on the Mitochondrial matrix side of the membrane; that stretch reads LTTKLTNTSISDAQ. A helical transmembrane segment spans residues 60 to 87; that stretch reads EMETVWTILPAIILVLIALPSLRILYMT. The Mitochondrial intermembrane portion of the chain corresponds to 88–227; sequence DEVNDPSFTI…IFEMGPVFTL (140 aa). Cu cation-binding residues include His161, Cys196, Glu198, Cys200, His204, and Met207. Glu198 lines the Mg(2+) pocket.

The protein belongs to the cytochrome c oxidase subunit 2 family. Component of the cytochrome c oxidase (complex IV, CIV), a multisubunit enzyme composed of 14 subunits. The complex is composed of a catalytic core of 3 subunits MT-CO1, MT-CO2 and MT-CO3, encoded in the mitochondrial DNA, and 11 supernumerary subunits COX4I, COX5A, COX5B, COX6A, COX6B, COX6C, COX7A, COX7B, COX7C, COX8 and NDUFA4, which are encoded in the nuclear genome. The complex exists as a monomer or a dimer and forms supercomplexes (SCs) in the inner mitochondrial membrane with NADH-ubiquinone oxidoreductase (complex I, CI) and ubiquinol-cytochrome c oxidoreductase (cytochrome b-c1 complex, complex III, CIII), resulting in different assemblies (supercomplex SCI(1)III(2)IV(1) and megacomplex MCI(2)III(2)IV(2)). Found in a complex with TMEM177, COA6, COX18, COX20, SCO1 and SCO2. Interacts with TMEM177 in a COX20-dependent manner. Interacts with COX20. Interacts with COX16. Cu cation is required as a cofactor.

The protein localises to the mitochondrion inner membrane. It catalyses the reaction 4 Fe(II)-[cytochrome c] + O2 + 8 H(+)(in) = 4 Fe(III)-[cytochrome c] + 2 H2O + 4 H(+)(out). Component of the cytochrome c oxidase, the last enzyme in the mitochondrial electron transport chain which drives oxidative phosphorylation. The respiratory chain contains 3 multisubunit complexes succinate dehydrogenase (complex II, CII), ubiquinol-cytochrome c oxidoreductase (cytochrome b-c1 complex, complex III, CIII) and cytochrome c oxidase (complex IV, CIV), that cooperate to transfer electrons derived from NADH and succinate to molecular oxygen, creating an electrochemical gradient over the inner membrane that drives transmembrane transport and the ATP synthase. Cytochrome c oxidase is the component of the respiratory chain that catalyzes the reduction of oxygen to water. Electrons originating from reduced cytochrome c in the intermembrane space (IMS) are transferred via the dinuclear copper A center (CU(A)) of subunit 2 and heme A of subunit 1 to the active site in subunit 1, a binuclear center (BNC) formed by heme A3 and copper B (CU(B)). The BNC reduces molecular oxygen to 2 water molecules using 4 electrons from cytochrome c in the IMS and 4 protons from the mitochondrial matrix. This Pan paniscus (Pygmy chimpanzee) protein is Cytochrome c oxidase subunit 2 (MT-CO2).